Reading from the N-terminus, the 579-residue chain is Kelch repeat and BTB domain-containing protein F47D12.7 (579 aa).

The 69-residue stretch at 51 to 119 (PTVTLVLRNN…PKAFEQGIKP (69 aa)) folds into the BTB domain. Kelch repeat units lie at residues 266-316 (AIVC…VVED), 317-363 (KLIV…RVND), 369-415 (LVFA…TIDN), 417-463 (IVAI…SIMN), 465-511 (VCMI…QMDT), and 513-559 (YVYV…TLSD).

This is Kelch repeat and BTB domain-containing protein F47D12.7 from Caenorhabditis elegans.